A 226-amino-acid chain; its full sequence is Cytochrome c oxidase subunit 2 (226 aa).

The Mitochondrial intermembrane segment spans residues 1–25 (MNTWLLSLQNSNSPTYDMMIFFHDF). A helical membrane pass occupies residues 26 to 47 (TMMILIFITLLILFIMFTMINN). Topologically, residues 48-61 (NLINRFLLQGHFIE) are mitochondrial matrix. A helical membrane pass occupies residues 62-81 (LIWTITPMIILILIAIPSFK). At 82–226 (ILYLTDEMFN…YFKNWLKSFL (145 aa)) the chain is on the mitochondrial intermembrane side. Cu cation contacts are provided by H160, C195, E197, C199, H203, and M206. E197 lines the Mg(2+) pocket.

This sequence belongs to the cytochrome c oxidase subunit 2 family. As to quaternary structure, component of the cytochrome c oxidase (complex IV, CIV), a multisubunit enzyme composed of a catalytic core of 3 subunits and several supernumerary subunits. The complex exists as a monomer or a dimer and forms supercomplexes (SCs) in the inner mitochondrial membrane with ubiquinol-cytochrome c oxidoreductase (cytochrome b-c1 complex, complex III, CIII). Requires Cu cation as cofactor.

It localises to the mitochondrion inner membrane. It catalyses the reaction 4 Fe(II)-[cytochrome c] + O2 + 8 H(+)(in) = 4 Fe(III)-[cytochrome c] + 2 H2O + 4 H(+)(out). Functionally, component of the cytochrome c oxidase, the last enzyme in the mitochondrial electron transport chain which drives oxidative phosphorylation. The respiratory chain contains 3 multisubunit complexes succinate dehydrogenase (complex II, CII), ubiquinol-cytochrome c oxidoreductase (cytochrome b-c1 complex, complex III, CIII) and cytochrome c oxidase (complex IV, CIV), that cooperate to transfer electrons derived from NADH and succinate to molecular oxygen, creating an electrochemical gradient over the inner membrane that drives transmembrane transport and the ATP synthase. Cytochrome c oxidase is the component of the respiratory chain that catalyzes the reduction of oxygen to water. Electrons originating from reduced cytochrome c in the intermembrane space (IMS) are transferred via the dinuclear copper A center (CU(A)) of subunit 2 and heme A of subunit 1 to the active site in subunit 1, a binuclear center (BNC) formed by heme A3 and copper B (CU(B)). The BNC reduces molecular oxygen to 2 water molecules using 4 electrons from cytochrome c in the IMS and 4 protons from the mitochondrial matrix. In Lasius sp, this protein is Cytochrome c oxidase subunit 2 (COII).